The primary structure comprises 244 residues: Purine nucleoside phosphorylase HI_0175 (244 aa).

Residues histidine 70, cysteine 105, and histidine 122 each coordinate Zn(2+).

This sequence belongs to the purine nucleoside phosphorylase YfiH/LACC1 family. As to quaternary structure, homodimer. Cu(2+) is required as a cofactor. Requires Zn(2+) as cofactor.

It catalyses the reaction adenosine + phosphate = alpha-D-ribose 1-phosphate + adenine. The enzyme catalyses S-methyl-5'-thioadenosine + phosphate = 5-(methylsulfanyl)-alpha-D-ribose 1-phosphate + adenine. It carries out the reaction inosine + phosphate = alpha-D-ribose 1-phosphate + hypoxanthine. The catalysed reaction is adenosine + H2O + H(+) = inosine + NH4(+). Purine nucleoside enzyme that catalyzes the phosphorolysis of adenosine and inosine nucleosides, yielding D-ribose 1-phosphate and the respective free bases, adenine and hypoxanthine. Also catalyzes the phosphorolysis of S-methyl-5'-thioadenosine into adenine and S-methyl-5-thio-alpha-D-ribose 1-phosphate. Also has adenosine deaminase activity. The chain is Purine nucleoside phosphorylase HI_0175 from Haemophilus influenzae (strain ATCC 51907 / DSM 11121 / KW20 / Rd).